Consider the following 275-residue polypeptide: Glutamate 5-kinase (275 aa).

Lys17 contributes to the ATP binding site. Residues Ser57, Asp144, and Asn160 each coordinate substrate. Residues 180 to 181 (SD) and 222 to 228 (TGGMLSK) contribute to the ATP site.

The protein belongs to the glutamate 5-kinase family.

It is found in the cytoplasm. The catalysed reaction is L-glutamate + ATP = L-glutamyl 5-phosphate + ADP. It functions in the pathway amino-acid biosynthesis; L-proline biosynthesis; L-glutamate 5-semialdehyde from L-glutamate: step 1/2. Functionally, catalyzes the transfer of a phosphate group to glutamate to form L-glutamate 5-phosphate. In Streptococcus pyogenes serotype M12 (strain MGAS2096), this protein is Glutamate 5-kinase.